The following is a 235-amino-acid chain: MGRAFEYRRAAKEARWDKMSKVFPKLAKAITVAAKEGGVEPDMNPKLRAAIAAAKAENMPKDNIDAAIKRANGKDSADIKTIFYDGKAAHGVQIIVECATDNPTRTVANVKAIFSKNGGEVLPSGSLSFMFSRKSVFELNKPTTDIEEVELELIDFGLSDIELEDDTLYVYGDYTSFGTLHEGIEKLGLEVKKGTLQYIPNSTITLSEEQMQEVERLLDKLEDDDDVQAVYTNIE.

It belongs to the TACO1 family.

It is found in the cytoplasm. The protein is Probable transcriptional regulatory protein Ccur92_05350 of Campylobacter curvus (strain 525.92).